Reading from the N-terminus, the 239-residue chain is Probable transcriptional regulatory protein ABO_1803 (239 aa).

It belongs to the TACO1 family.

It localises to the cytoplasm. This is Probable transcriptional regulatory protein ABO_1803 from Alcanivorax borkumensis (strain ATCC 700651 / DSM 11573 / NCIMB 13689 / SK2).